Reading from the N-terminus, the 99-residue chain is UPF0125 protein BU253 (99 aa).

Belongs to the UPF0125 (RnfH) family.

The sequence is that of UPF0125 protein BU253 from Buchnera aphidicola subsp. Acyrthosiphon pisum (strain APS) (Acyrthosiphon pisum symbiotic bacterium).